Consider the following 473-residue polypeptide: Photosystem II CP43 reaction center protein (473 aa).

A propeptide spanning residues 1–14 (MKTLYSLRRFYHVE) is cleaved from the precursor. Thr15 is modified (N-acetylthreonine). Thr15 bears the Phosphothreonine mark. The next 5 membrane-spanning stretches (helical) occupy residues 69–93 (LFEV…PHLA), 134–155 (LLGP…KDRN), 178–200 (KALY…RKIT), 255–275 (KPFA…LSYS), and 291–312 (WFNN…ASQA). A [CaMn4O5] cluster-binding site is contributed by Glu367. A helical membrane pass occupies residues 447-471 (RARAAAAGFEKGIDRDFEPVLSMTP).

This sequence belongs to the PsbB/PsbC family. PsbC subfamily. PSII is composed of 1 copy each of membrane proteins PsbA, PsbB, PsbC, PsbD, PsbE, PsbF, PsbH, PsbI, PsbJ, PsbK, PsbL, PsbM, PsbT, PsbX, PsbY, PsbZ, Psb30/Ycf12, at least 3 peripheral proteins of the oxygen-evolving complex and a large number of cofactors. It forms dimeric complexes. Binds multiple chlorophylls and provides some of the ligands for the Ca-4Mn-5O cluster of the oxygen-evolving complex. It may also provide a ligand for a Cl- that is required for oxygen evolution. PSII binds additional chlorophylls, carotenoids and specific lipids. serves as cofactor.

The protein localises to the plastid. The protein resides in the chloroplast thylakoid membrane. In terms of biological role, one of the components of the core complex of photosystem II (PSII). It binds chlorophyll and helps catalyze the primary light-induced photochemical processes of PSII. PSII is a light-driven water:plastoquinone oxidoreductase, using light energy to abstract electrons from H(2)O, generating O(2) and a proton gradient subsequently used for ATP formation. This Aethionema cordifolium (Lebanon stonecress) protein is Photosystem II CP43 reaction center protein.